A 202-amino-acid polypeptide reads, in one-letter code: Cold-regulated 413 plasma membrane protein 4 (202 aa).

Residues Met-1 to Gly-42 lie on the Extracellular side of the membrane. A helical transmembrane segment spans residues Val-43 to Ile-63. At Leu-64–Lys-72 the chain is on the cytoplasmic side. A helical membrane pass occupies residues Met-73 to Phe-93. Topologically, residues Phe-94–Asp-97 are extracellular. Residues Phe-98–Pro-118 traverse the membrane as a helical segment. A topological domain (cytoplasmic) is located at residue Glu-119. The helical transmembrane segment at Trp-120 to Trp-140 threads the bilayer. The Extracellular portion of the chain corresponds to Thr-141–Ser-145. Residues Trp-146–Ala-166 traverse the membrane as a helical segment. Topologically, residues Ser-167–Ser-181 are cytoplasmic. The chain crosses the membrane as a helical span at residues Asn-182–Phe-202.

It belongs to the Cold-regulated 413 protein family.

The protein resides in the cell membrane. This chain is Cold-regulated 413 plasma membrane protein 4, found in Arabidopsis thaliana (Mouse-ear cress).